We begin with the raw amino-acid sequence, 451 residues long: UPF0210 protein Asuc_1169 (451 aa).

It belongs to the UPF0210 family. As to quaternary structure, homodimer.

The polypeptide is UPF0210 protein Asuc_1169 (Actinobacillus succinogenes (strain ATCC 55618 / DSM 22257 / CCUG 43843 / 130Z)).